Here is a 157-residue protein sequence, read N- to C-terminus: Parasitophorous vacuole membrane protein S16 (157 aa).

An N-terminal signal peptide occupies residues 1–25; sequence MNIRKFIPSLALMLIFFAFANLVLS. Residues 26-105 are Extracellular-facing; sequence DANDKAKKPA…DKKTTVNRNL (80 aa). The tract at residues 30 to 74 is disordered; it reads KAKKPAGKGSPSTLQTPGSSSGASLHAVGPNQGGLSQGLSGKDSA. Residues 39 to 52 show a composition bias toward polar residues; sequence SPSTLQTPGSSSGA. A helical transmembrane segment spans residues 106–126; it reads IISTAVTNMIMLIILSGIVGF. Residues 127 to 157 are Cytoplasmic-facing; the sequence is KVKKTKNADDDKGDKDKDKDNTDEGDEGDDS. Residues 130–157 form a disordered region; the sequence is KTKNADDDKGDKDKDKDNTDEGDEGDDS. A compositionally biased stretch (basic and acidic residues) spans 132 to 148; sequence KNADDDKGDKDKDKDNT.

Its subcellular location is the parasitophorous vacuole membrane. The protein localises to the vacuole. Involved in male gametogenesis. Required for exflagellation of male gametocytes. May play a role in parasite transmission in the mosquito. Binds to the mosquito vector midgut. The chain is Parasitophorous vacuole membrane protein S16 from Plasmodium falciparum (isolate 3D7).